The chain runs to 89 residues: Small ribosomal subunit protein uS15 (89 aa).

This sequence belongs to the universal ribosomal protein uS15 family. As to quaternary structure, part of the 30S ribosomal subunit. Forms a bridge to the 50S subunit in the 70S ribosome, contacting the 23S rRNA.

Functionally, one of the primary rRNA binding proteins, it binds directly to 16S rRNA where it helps nucleate assembly of the platform of the 30S subunit by binding and bridging several RNA helices of the 16S rRNA. Its function is as follows. Forms an intersubunit bridge (bridge B4) with the 23S rRNA of the 50S subunit in the ribosome. This chain is Small ribosomal subunit protein uS15, found in Shewanella amazonensis (strain ATCC BAA-1098 / SB2B).